A 182-amino-acid polypeptide reads, in one-letter code: Ribosome maturation factor RimM (182 aa).

The PRC barrel domain maps to 103 to 182; the sequence is EDDYYWKDLM…RVEVDWDPGF (80 aa).

Belongs to the RimM family. In terms of assembly, binds ribosomal protein uS19.

It is found in the cytoplasm. Its function is as follows. An accessory protein needed during the final step in the assembly of 30S ribosomal subunit, possibly for assembly of the head region. Essential for efficient processing of 16S rRNA. May be needed both before and after RbfA during the maturation of 16S rRNA. It has affinity for free ribosomal 30S subunits but not for 70S ribosomes. This Yersinia enterocolitica serotype O:8 / biotype 1B (strain NCTC 13174 / 8081) protein is Ribosome maturation factor RimM.